The sequence spans 522 residues: Glutamate--cysteine ligase (522 aa).

Belongs to the glutamate--cysteine ligase type 1 family. Type 1 subfamily.

It carries out the reaction L-cysteine + L-glutamate + ATP = gamma-L-glutamyl-L-cysteine + ADP + phosphate + H(+). The protein operates within sulfur metabolism; glutathione biosynthesis; glutathione from L-cysteine and L-glutamate: step 1/2. The chain is Glutamate--cysteine ligase from Shewanella pealeana (strain ATCC 700345 / ANG-SQ1).